We begin with the raw amino-acid sequence, 199 residues long: 7-methyl-GTP pyrophosphatase (199 aa).

Asp-76 serves as the catalytic Proton acceptor.

Belongs to the Maf family. YceF subfamily. A divalent metal cation is required as a cofactor.

Its subcellular location is the cytoplasm. The catalysed reaction is N(7)-methyl-GTP + H2O = N(7)-methyl-GMP + diphosphate + H(+). Its function is as follows. Nucleoside triphosphate pyrophosphatase that hydrolyzes 7-methyl-GTP (m(7)GTP). May have a dual role in cell division arrest and in preventing the incorporation of modified nucleotides into cellular nucleic acids. This Brucella suis biovar 1 (strain 1330) protein is 7-methyl-GTP pyrophosphatase (maf-2).